The sequence spans 962 residues: Protease 3 (962 aa).

Residues 1-23 form the signal peptide; that stretch reads MPRSIWFKALLLFVALWAPLSQA. Residue His-88 participates in Zn(2+) binding. Residue Glu-91 is the Proton acceptor of the active site. Residues His-92 and Glu-169 each coordinate Zn(2+).

This sequence belongs to the peptidase M16 family. Monomer. The cofactor is Zn(2+).

The protein resides in the periplasm. The enzyme catalyses Preferential cleavage of 16-Tyr-|-Leu-17 and 25-Phe-|-Tyr-26 bonds of oxidized insulin B chain. Also acts on other substrates of Mw less than 7 kDa such as insulin and glucagon.. Functionally, endopeptidase that degrades small peptides of less than 7 kDa, such as glucagon and insulin. The sequence is that of Protease 3 (ptrA) from Escherichia coli O6:H1 (strain CFT073 / ATCC 700928 / UPEC).